The sequence spans 330 residues: DNA-directed RNA polymerase subunit alpha (330 aa).

The segment at 1–236 is alpha N-terminal domain (alpha-NTD); it reads MQGSVTEFLK…EQLDAFVDLR (236 aa). The alpha C-terminal domain (alpha-CTD) stretch occupies residues 250–330; the sequence is FDPILLRPVD…NWPPASIAED (81 aa).

It belongs to the RNA polymerase alpha chain family. Homodimer. The RNAP catalytic core consists of 2 alpha, 1 beta, 1 beta' and 1 omega subunit. When a sigma factor is associated with the core the holoenzyme is formed, which can initiate transcription.

The catalysed reaction is RNA(n) + a ribonucleoside 5'-triphosphate = RNA(n+1) + diphosphate. Its function is as follows. DNA-dependent RNA polymerase catalyzes the transcription of DNA into RNA using the four ribonucleoside triphosphates as substrates. This Vibrio cholerae serotype O1 (strain ATCC 39315 / El Tor Inaba N16961) protein is DNA-directed RNA polymerase subunit alpha.